Here is a 309-residue protein sequence, read N- to C-terminus: Pyridoxal kinase (309 aa).

N-acetylthreonine; in Pyridoxal kinase, N-terminally processed is present on Thr-2. 2 residues coordinate pyridoxal: Ser-23 and Thr-58. Position 58 (Thr-58) interacts with pyridoxal 5'-phosphate. An ATP-binding site is contributed by Asp-124. Asp-124 is a binding site for Na(+). Residue Asp-129 participates in Mg(2+) binding. Thr-155 provides a ligand contact to Na(+). Residues 157–160 (NQFE), 193–194 (TS), 225–227 (IPA), and Thr-232 each bind ATP. Thr-193 serves as a coordination point for Na(+). 233 to 234 (GD) is a pyridoxal 5'-phosphate binding site. The active-site Proton acceptor is the Asp-234.

The protein belongs to the pyridoxine kinase family. Homodimer. Zn(2+) is required as a cofactor. In terms of tissue distribution, expressed ubiquitously in leaves, stems, roots, flowers and siliques. Present in root hairs and other tip-growing cells such as papillar cells on the top of stigma.

It carries out the reaction pyridoxal + ATP = pyridoxal 5'-phosphate + ADP + H(+). It functions in the pathway cofactor metabolism; pyridoxal 5'-phosphate salvage; pyridoxal 5'-phosphate from pyridoxal: step 1/1. In terms of biological role, catalyzes the transfer of a phosphate group from ATP to the 5-hydroxylmethyl group of pyridoxal to form the biologically active pyridoxal phosphate, an active form of vitamin B6. Required for Na(+) and K(+) homeostasis and for salt tolerance. Involved in root hair development, both for initiation and tip growth. In Arabidopsis thaliana (Mouse-ear cress), this protein is Pyridoxal kinase.